We begin with the raw amino-acid sequence, 1301 residues long: Dentin sialophosphoprotein (1301 aa).

An N-terminal signal peptide occupies residues 1 to 15 (MKIITYFCIWAVAWA). Residues asparagine 41 and asparagine 49 are each glycosylated (N-linked (GlcNAc...) asparagine). The interval 55–89 (KESGVLVHEGDRGRQENTQDGHKGEGNGSKWAEVG) is disordered. A compositionally biased stretch (basic and acidic residues) spans 62 to 79 (HEGDRGRQENTQDGHKGE). N-linked (GlcNAc...) asparagine glycosylation is found at asparagine 81, asparagine 130, asparagine 150, asparagine 190, asparagine 191, asparagine 209, and asparagine 222. A compositionally biased stretch (polar residues) spans 146-165 (AGATNRSNTNGNTDKNTQNG). Residues 146–171 (AGATNRSNTNGNTDKNTQNGDVGDAG) form a disordered region. Residues 202-1301 (NSCRNEGNTS…SDSNHSTSDD (1100 aa)) are disordered. The segment covering 203 to 221 (SCRNEGNTSEITPQINSKR) has biased composition (polar residues). A compositionally biased stretch (acidic residues) spans 251–267 (ADEDEDEGSGDDEDEEA). Phosphoserine; by CK1 is present on serine 259. Positions 271-280 (KDSSNNSKGQ) are enriched in polar residues. Asparagine 275 carries an N-linked (GlcNAc...) asparagine glycan. 2 stretches are compositionally biased toward basic and acidic residues: residues 281–293 (EGQD…DHDS) and 300–327 (DSKE…KSEE). Serine 301 carries the phosphoserine modification. The N-linked (GlcNAc...) asparagine glycan is linked to asparagine 336. The segment covering 340-377 (RIEDTQKLNHRESKRVENRITKESETHAVGKSQDKGIE) has biased composition (basic and acidic residues). N-linked (GlcNAc...) asparagine glycosylation is present at asparagine 387. A compositionally biased stretch (basic and acidic residues) spans 388–404 (ITKEVGKGNEGKEDKGQ). Low complexity-rich tracts occupy residues 439–452 (SNTG…GYDS) and 462–487 (GDDP…NSSS). The Cell attachment site signature appears at 488 to 490 (RGD). Positions 488 to 506 (RGDASYNSDESKDNGNGSD) are enriched in polar residues. Residues 518–534 (TSDTNNSDSNGNGNNGN) show a composition bias toward low complexity. Positions 536–549 (DNDKSDSGKGKSDS) are enriched in basic and acidic residues. Low complexity predominate over residues 555 to 564 (SDSSNSSDSS). Positions 581–595 (DSSDSDSSDSSDSDS) are enriched in acidic residues. Residues 596-619 (SDSSNSSDSSDSSDSSDSSDSSDS) show a composition bias toward low complexity. Basic and acidic residues predominate over residues 620–642 (SDSKSDSSKSESDSSDSDSKSDS). Composition is skewed to low complexity over residues 643 to 705 (SDSN…SDSS), 715 to 1264 (SSDS…STSD), 1272 to 1284 (QSKS…NGSD), and 1292 to 1301 (SDSNHSTSDD).

Interacts with FBLN7. In terms of processing, DSP is glycosylated. As to expression, expressed in teeth. DPP is synthesized by odontoblast and transiently expressed by pre-ameloblasts.

The protein resides in the secreted. It localises to the extracellular space. It is found in the extracellular matrix. Its function is as follows. DSP may be an important factor in dentinogenesis. DPP may bind high amount of calcium and facilitate initial mineralization of dentin matrix collagen as well as regulate the size and shape of the crystals. The protein is Dentin sialophosphoprotein (DSPP) of Homo sapiens (Human).